We begin with the raw amino-acid sequence, 62 residues long: Photosystem II reaction center protein Z (62 aa).

Helical transmembrane passes span 8–28 (ALFA…VVLA) and 41–61 (FSGI…NSFV).

It belongs to the PsbZ family. In terms of assembly, PSII is composed of 1 copy each of membrane proteins PsbA, PsbB, PsbC, PsbD, PsbE, PsbF, PsbH, PsbI, PsbJ, PsbK, PsbL, PsbM, PsbT, PsbY, PsbZ, Psb30/Ycf12, at least 3 peripheral proteins of the oxygen-evolving complex and a large number of cofactors. It forms dimeric complexes.

It is found in the plastid. It localises to the chloroplast thylakoid membrane. Functionally, may control the interaction of photosystem II (PSII) cores with the light-harvesting antenna, regulates electron flow through the 2 photosystem reaction centers. PSII is a light-driven water plastoquinone oxidoreductase, using light energy to abstract electrons from H(2)O, generating a proton gradient subsequently used for ATP formation. This is Photosystem II reaction center protein Z from Chlorella vulgaris (Green alga).